The sequence spans 137 residues: Small ribosomal subunit protein uS11A (137 aa).

Position 2 is an N-acetylserine (S2). The segment at 117 to 137 is disordered; sequence DVTPVPSDSTRKKGGRRGRRL. Basic residues predominate over residues 128–137; sequence KKGGRRGRRL.

It belongs to the universal ribosomal protein uS11 family. As to quaternary structure, component of the small ribosomal subunit (SSU). Mature yeast ribosomes consist of a small (40S) and a large (60S) subunit. The 40S small subunit contains 1 molecule of ribosomal RNA (18S rRNA) and 33 different proteins (encoded by 57 genes). The large 60S subunit contains 3 rRNA molecules (25S, 5.8S and 5S rRNA) and 46 different proteins (encoded by 81 genes). uS11 interacts with eS1 forming part of the mRNA exit tunnel. uS11 interacts with snoRNA U3. uS11 interacts with MPP10. Component of the ribosomal small subunit (SSU) processome composed of at least 40 protein subunits and snoRNA U3. In terms of processing, N-terminally acetylated by acetyltransferase NatA.

It localises to the cytoplasm. Its subcellular location is the nucleus. The protein resides in the nucleolus. Component of the ribosome, a large ribonucleoprotein complex responsible for the synthesis of proteins in the cell. The small ribosomal subunit (SSU) binds messenger RNAs (mRNAs) and translates the encoded message by selecting cognate aminoacyl-transfer RNA (tRNA) molecules. The large subunit (LSU) contains the ribosomal catalytic site termed the peptidyl transferase center (PTC), which catalyzes the formation of peptide bonds, thereby polymerizing the amino acids delivered by tRNAs into a polypeptide chain. The nascent polypeptides leave the ribosome through a tunnel in the LSU and interact with protein factors that function in enzymatic processing, targeting, and the membrane insertion of nascent chains at the exit of the ribosomal tunnel. uS11 is involved in nucleolar processing of pre-18S ribosomal RNA and ribosome assembly. The protein is Small ribosomal subunit protein uS11A of Saccharomyces cerevisiae (strain ATCC 204508 / S288c) (Baker's yeast).